We begin with the raw amino-acid sequence, 491 residues long: Serine/threonine-protein kinase 3 (491 aa).

N-acetylmethionine is present on Met1. Position 15 is a phosphoserine; by PLK1 (Ser15). The 252-residue stretch at 27-278 (FDVLEKLGEG…ATQLLQHPFI (252 aa)) folds into the Protein kinase domain. ATP-binding positions include 33–41 (LGEGSYGSV) and Lys56. The residue at position 117 (Thr117) is a Phosphothreonine; by PKB/AKT1. The active-site Proton acceptor is Asp146. The Mg(2+) site is built by Asn151 and Asp164. Residues Thr174 and Thr180 each carry the phosphothreonine; by autocatalysis modification. Residues 287 to 328 (LRDLITEAMEIKAKRHEEQQRELEEEEENSDEDELDSHTMVK) adopt a coiled-coil conformation. The interval 301–327 (RHEEQQRELEEEEENSDEDELDSHTMV) is disordered. Over residues 309 to 321 (LEEEEENSDEDEL) the composition is skewed to acidic residues. At Ser316 the chain carries Phosphoserine. Residues Thr336 and Thr378 each carry the phosphothreonine; by autocatalysis modification. The segment at 370-392 (EDEEEEDGTMKRNATSPQVQRPS) is disordered. Positions 381–390 (RNATSPQVQR) are enriched in polar residues. At Thr384 the chain carries Phosphothreonine; by PKB/AKT1. Phosphoserine is present on residues Ser385 and Ser444. Residues 437–484 (FDFLKNLSLEELQMRLKALDPMMEREIEELRQRYTAKRQPILDAMDAK) enclose the SARAH domain. Positions 442-475 (NLSLEELQMRLKALDPMMEREIEELRQRYTAKRQ) form a coiled coil.

Belongs to the protein kinase superfamily. STE Ser/Thr protein kinase family. STE20 subfamily. As to quaternary structure, homodimer; mediated via the coiled-coil region. Interacts with NORE1, which inhibits autoactivation. Interacts with and stabilizes SAV1. Interacts with RAF1, which prevents dimerization and phosphorylation. Interacts with RASSF1. Interacts (via SARAH domain) with isoform 1 of NEK2. Interacts with ESR1 only in the presence of SAV1. Interacts with PKB/AKT1. Forms a tripartite complex with MOBKL1B and STK38. Interacts with RASSF2 (via SARAH domain). Interacts with DLG5 (via PDZ domain 3). Interacts with LATS1; this interaction is inhibited in the presence of DLG5. Interacts with MARK3 in the presence of DLG5. Interacts with RASSF5; this interaction inhibits STK3 autoactivation through heterodimerization. Interacts (when phosphorylated) with SLMAP (via FHA domain); the interaction associates STK3 with the STRIPAK complex. It depends on Mg(2+) as a cofactor. In terms of processing, autophosphorylated on two residues Thr-174 and Thr-180, leading to activation. Phosphorylation at Thr-117 and Thr-384 by PKB/AKT1, leads to inhibition of its: cleavage, kinase activity, autophosphorylation at Thr-180, binding to RASSF1 and nuclear translocation, and increase in its binding to RAF1. Phosphorylated at Ser-15 by PLK1, leading to activation. When autophosphorylated at Thr-180, recruits STRIPAK complex and promotes PP2A-mediated dephosphorylation and inactivation of STK3. Post-translationally, proteolytically cleaved by caspase-3 during apoptosis. Proteolytic cleavage results in kinase activation and nuclear translocation of the truncated form (MST1/N). Ubiquitinated by TRIM69; leading to its redistribution to the perinuclear cytoskeleton, where it is phosphorylated by PLK1 and subsequently activated. Expressed at high levels in adult kidney, skeletal and placenta tissues and at very low levels in adult heart, lung and brain tissues.

It is found in the cytoplasm. The protein localises to the nucleus. Its subcellular location is the cytoskeleton. The protein resides in the microtubule organizing center. It localises to the centrosome. The catalysed reaction is L-seryl-[protein] + ATP = O-phospho-L-seryl-[protein] + ADP + H(+). It catalyses the reaction L-threonyl-[protein] + ATP = O-phospho-L-threonyl-[protein] + ADP + H(+). Inhibited by the C-terminal non-catalytic region. Activated by caspase-cleavage. Full activation also requires homodimerization and autophosphorylation of Thr-180, which are inhibited by the proto-oncogene product RAF1. Activated by RASSF1 which acts by preventing its dephosphorylation. When autophosphorylated at Thr-180, recruits STRIPAK complex and promotes PP2A-mediated dephosphorylation and inactivation of STK3. Its function is as follows. Stress-activated, pro-apoptotic kinase which, following caspase-cleavage, enters the nucleus and induces chromatin condensation followed by internucleosomal DNA fragmentation. Key component of the Hippo signaling pathway which plays a pivotal role in organ size control and tumor suppression by restricting proliferation and promoting apoptosis. The core of this pathway is composed of a kinase cascade wherein STK3/MST2 and STK4/MST1, in complex with its regulatory protein SAV1, phosphorylates and activates LATS1/2 in complex with its regulatory protein MOB1, which in turn phosphorylates and inactivates YAP1 oncoprotein and WWTR1/TAZ. Phosphorylation of YAP1 by LATS2 inhibits its translocation into the nucleus to regulate cellular genes important for cell proliferation, cell death, and cell migration. STK3/MST2 and STK4/MST1 are required to repress proliferation of mature hepatocytes, to prevent activation of facultative adult liver stem cells (oval cells), and to inhibit tumor formation. Phosphorylates NKX2-1. Phosphorylates NEK2 and plays a role in centrosome disjunction by regulating the localization of NEK2 to centrosome, and its ability to phosphorylate CROCC and CEP250. In conjunction with SAV1, activates the transcriptional activity of ESR1 through the modulation of its phosphorylation. Positively regulates RAF1 activation via suppression of the inhibitory phosphorylation of RAF1 on 'Ser-259'. Phosphorylates MOBKL1A and RASSF2. Phosphorylates MOBKL1B on 'Thr-74'. Acts cooperatively with MOBKL1B to activate STK38. The sequence is that of Serine/threonine-protein kinase 3 from Homo sapiens (Human).